The primary structure comprises 384 residues: Succinyl-diaminopimelate desuccinylase (384 aa).

Histidine 71 is a binding site for Zn(2+). Aspartate 73 is an active-site residue. Zn(2+) is bound at residue aspartate 104. Residue glutamate 139 is the Proton acceptor of the active site. Residues glutamate 140, glutamate 168, and histidine 357 each contribute to the Zn(2+) site.

The protein belongs to the peptidase M20A family. DapE subfamily. In terms of assembly, homodimer. The cofactor is Zn(2+). Requires Co(2+) as cofactor.

It catalyses the reaction N-succinyl-(2S,6S)-2,6-diaminopimelate + H2O = (2S,6S)-2,6-diaminopimelate + succinate. Its pathway is amino-acid biosynthesis; L-lysine biosynthesis via DAP pathway; LL-2,6-diaminopimelate from (S)-tetrahydrodipicolinate (succinylase route): step 3/3. In terms of biological role, catalyzes the hydrolysis of N-succinyl-L,L-diaminopimelic acid (SDAP), forming succinate and LL-2,6-diaminopimelate (DAP), an intermediate involved in the bacterial biosynthesis of lysine and meso-diaminopimelic acid, an essential component of bacterial cell walls. This chain is Succinyl-diaminopimelate desuccinylase, found in Bradyrhizobium sp. (strain ORS 278).